Consider the following 282-residue polypeptide: Undecaprenyl-diphosphatase (282 aa).

A run of 7 helical transmembrane segments spans residues 45-65, 86-106, 114-134, 151-171, 196-216, 224-244, and 256-276; these read AFME…VVFI, WQLW…GIPL, FHNF…FILI, LPYK…FPGT, FFLG…KFIL, GQLT…MYVI, and FTVF…YWVF.

Belongs to the UppP family.

It localises to the cell membrane. It carries out the reaction di-trans,octa-cis-undecaprenyl diphosphate + H2O = di-trans,octa-cis-undecaprenyl phosphate + phosphate + H(+). In terms of biological role, catalyzes the dephosphorylation of undecaprenyl diphosphate (UPP). Confers resistance to bacitracin. The chain is Undecaprenyl-diphosphatase from Streptococcus gordonii (strain Challis / ATCC 35105 / BCRC 15272 / CH1 / DL1 / V288).